A 592-amino-acid chain; its full sequence is UPF0329 protein ECU01_0110/ECU01_1500/ECU08_0040 (592 aa).

Basic and acidic residues-rich tracts occupy residues 306–339 (RQRR…SKEK) and 353–362 (EAKEEEKKES). The disordered stretch occupies residues 306 to 404 (RQRRREREIE…RKRYKIHRRV (99 aa)).

The protein belongs to the UPF0329 family.

This Encephalitozoon cuniculi (strain GB-M1) (Microsporidian parasite) protein is UPF0329 protein ECU01_0110/ECU01_1500/ECU08_0040.